A 437-amino-acid polypeptide reads, in one-letter code: tRNA modification GTPase MnmE (437 aa).

3 residues coordinate (6S)-5-formyl-5,6,7,8-tetrahydrofolate: R21, E79, and R119. Positions 223 to 364 (GFRVVLAGPP…FRSALIAHAR (142 aa)) constitute a TrmE-type G domain. Residues 233–238 (NAGKST), 252–258 (AAEPGTT), and 277–280 (DTAG) each bind GTP. Mg(2+) is bound by residues S237 and T258. Residue K437 participates in (6S)-5-formyl-5,6,7,8-tetrahydrofolate binding.

The protein belongs to the TRAFAC class TrmE-Era-EngA-EngB-Septin-like GTPase superfamily. TrmE GTPase family. Homodimer. Heterotetramer of two MnmE and two MnmG subunits. The cofactor is K(+).

It localises to the cytoplasm. Exhibits a very high intrinsic GTPase hydrolysis rate. Involved in the addition of a carboxymethylaminomethyl (cmnm) group at the wobble position (U34) of certain tRNAs, forming tRNA-cmnm(5)s(2)U34. This is tRNA modification GTPase MnmE from Novosphingobium aromaticivorans (strain ATCC 700278 / DSM 12444 / CCUG 56034 / CIP 105152 / NBRC 16084 / F199).